A 358-amino-acid polypeptide reads, in one-letter code: Fructose-bisphosphate aldolase class 2 (358 aa).

A D-glyceraldehyde 3-phosphate-binding site is contributed by S61. Catalysis depends on D109, which acts as the Proton donor. Residues H110, D144, E174, and H226 each contribute to the Zn(2+) site. G227 lines the dihydroxyacetone phosphate pocket. H264 contacts Zn(2+). Dihydroxyacetone phosphate is bound by residues 265–267 and 286–289; these read GGS and NIDT.

This sequence belongs to the class II fructose-bisphosphate aldolase family. Requires Zn(2+) as cofactor.

It carries out the reaction beta-D-fructose 1,6-bisphosphate = D-glyceraldehyde 3-phosphate + dihydroxyacetone phosphate. The protein operates within carbohydrate degradation; glycolysis; D-glyceraldehyde 3-phosphate and glycerone phosphate from D-glucose: step 4/4. Functionally, catalyzes the aldol condensation of dihydroxyacetone phosphate (DHAP or glycerone-phosphate) with glyceraldehyde 3-phosphate (G3P) to form fructose 1,6-bisphosphate (FBP) in gluconeogenesis and the reverse reaction in glycolysis. The protein is Fructose-bisphosphate aldolase class 2 (fbaA) of Buchnera aphidicola subsp. Acyrthosiphon pisum (strain APS) (Acyrthosiphon pisum symbiotic bacterium).